A 186-amino-acid polypeptide reads, in one-letter code: ADP-ribosylation factor-like protein 6 (186 aa).

The N-myristoyl glycine moiety is linked to residue Gly2. GTP contacts are provided by residues 24–31, 69–73, and 130–133; these read GLDNSGKT, DMSGQ, and NKMD.

This sequence belongs to the small GTPase superfamily. Arf family. In terms of assembly, interacts with SEC61B, ARL6IP1, ARL6IP2, ARL6IP3, ARL6IP4 ARL6IP5 and ARL6IP6. Interacts (GTP-bound form) with the BBSome a complex that contains BBS1, BBS2, BBS4, BBS5, BBS7, BBS8/TTC8, BBS9 and BBIP10. Interacts (GTP-free form) with IFT27.

It is found in the cell projection. Its subcellular location is the cilium membrane. It localises to the cytoplasm. The protein localises to the cytoskeleton. The protein resides in the cilium axoneme. It is found in the cilium basal body. Its function is as follows. Involved in membrane protein trafficking at the base of the ciliary organelle. Mediates recruitment onto plasma membrane of the BBSome complex which would constitute a coat complex required for sorting of specific membrane proteins to the primary cilia. Together with the BBSome complex and LTZL1, controls SMO ciliary trafficking and contributes to the sonic hedgehog (SHH) pathway regulation. May regulate cilia assembly and disassembly and subsequent ciliary signaling events such as the Wnt signaling cascade. Isoform 2 may be required for proper retinal function and organization. The sequence is that of ADP-ribosylation factor-like protein 6 (ARL6) from Bos taurus (Bovine).